The sequence spans 149 residues: 3-dehydroquinate dehydratase (149 aa).

Y22 acts as the Proton acceptor in catalysis. Substrate contacts are provided by N74, H80, and D87. Residue H100 is the Proton donor of the active site. Residues 101–102 and R111 each bind substrate; that span reads LS.

It belongs to the type-II 3-dehydroquinase family. Homododecamer.

It carries out the reaction 3-dehydroquinate = 3-dehydroshikimate + H2O. The protein operates within metabolic intermediate biosynthesis; chorismate biosynthesis; chorismate from D-erythrose 4-phosphate and phosphoenolpyruvate: step 3/7. Its function is as follows. Catalyzes a trans-dehydration via an enolate intermediate. In Vesicomyosocius okutanii subsp. Calyptogena okutanii (strain HA), this protein is 3-dehydroquinate dehydratase.